A 301-amino-acid polypeptide reads, in one-letter code: Acetylglutamate kinase (301 aa).

Residues 72–73, Arg-94, and Asn-199 each bind substrate; that span reads GG.

The protein belongs to the acetylglutamate kinase family. ArgB subfamily.

The protein resides in the cytoplasm. The enzyme catalyses N-acetyl-L-glutamate + ATP = N-acetyl-L-glutamyl 5-phosphate + ADP. The protein operates within amino-acid biosynthesis; L-arginine biosynthesis; N(2)-acetyl-L-ornithine from L-glutamate: step 2/4. Its function is as follows. Catalyzes the ATP-dependent phosphorylation of N-acetyl-L-glutamate. In Azorhizobium caulinodans (strain ATCC 43989 / DSM 5975 / JCM 20966 / LMG 6465 / NBRC 14845 / NCIMB 13405 / ORS 571), this protein is Acetylglutamate kinase.